The following is a 237-amino-acid chain: DNA repair protein RecO (237 aa).

The protein belongs to the RecO family.

Its function is as follows. Involved in DNA repair and RecF pathway recombination. The protein is DNA repair protein RecO of Rickettsia akari (strain Hartford).